The primary structure comprises 380 residues: GDSL esterase/lipase At3g26430 (380 aa).

The N-terminal stretch at 1 to 25 (METNLLLVKCVLLASCLIHPRACSP) is a signal peptide. Residue S38 is the Nucleophile of the active site. N97, N115, and N183 each carry an N-linked (GlcNAc...) asparagine glycan. Residues D346 and H349 contribute to the active site.

This sequence belongs to the 'GDSL' lipolytic enzyme family.

Its subcellular location is the secreted. The catalysed reaction is hexadecanoate ester + H2O = an aliphatic alcohol + hexadecanoate + H(+). The enzyme catalyses a butanoate ester + H2O = an aliphatic alcohol + butanoate + H(+). With respect to regulation, lipase activity is inhibited by phenylmethylsulfonyl fluoride (PMSF), but not neostigmine bromide (NB). Lipase that can hydrolyze p-nitrophenyl butyrate and p-nitrophenyl palmitate in vitro. Possesses low activity against p-nitrophenyl acetate. Substrate preference is p-nitrophenyl palmitate &gt; p-nitrophenyl butyrate &gt;&gt; p-nitrophenyl acetate. Lacks cholinesterase activity. The sequence is that of GDSL esterase/lipase At3g26430 from Arabidopsis thaliana (Mouse-ear cress).